A 550-amino-acid chain; its full sequence is MDRGAVVGFLLGVCVVSCLAGTPKTSWRRVSVGEDVSLLPAPGPTGRGPTQKLLWAVEPLDGCGPLHPSWVSLMPPKQVPETVVDAACMRAPVPLAMAYAPPAPSATGGLRTDFVWQERAAVVNRSLVIHGVRETDSGLYTLSVGDIKDPARQVASVVLVVQPAPVPTPPPTPADYDEDDNDEGEDESLAGTPASGTPRLPPPPAPPRSWPSAPEVSHVRGVTVRMETPEAILFSPGETFSTNVSIHAIAHDDQTYSMDVVWLRFDVPTSCAEMRIYESCLYHPQLPECLSPADAPCAASTWTSRLAVRSYAGCSRTNPPPRCSAEAHMEPVPGLAWQAASVNLEFRDASPQHSGLYLCVVYVNDHIHAWGHITISTAAQYRNAVVEQPLPQRGADLAEPTHPHVGAPPHAPPTHGALRLGAVMGAALLLSALGLSVWACMTCWRRRAWRAVKSRASGKGPTYIRVADSELYADWSSDSEGERDQVPWLAPPERPDSPSTNGSGFEILSPTAPSVYPRSDGHQSRRQLTTFGSGRPDRRYSQASDSSVFW.

Positions 1 to 20 are cleaved as a signal peptide; the sequence is MDRGAVVGFLLGVCVVSCLA. Residues 21–419 are Virion surface-facing; the sequence is GTPKTSWRRV…HAPPTHGALR (399 aa). Positions 63 to 88 are interaction with gI; sequence CGPLHPSWVSLMPPKQVPETVVDAAC. N-linked (GlcNAc...) asparagine; by host glycosylation is present at asparagine 124. The interval 162-214 is disordered; it reads QPAPVPTPPPTPADYDEDDNDEGEDESLAGTPASGTPRLPPPPAPPRSWPSAP. Residues 164-173 are compositionally biased toward pro residues; the sequence is APVPTPPPTP. A compositionally biased stretch (acidic residues) spans 175–188; the sequence is DYDEDDNDEGEDES. The residue at position 176 (tyrosine 176) is a Sulfotyrosine; by host. Over residues 199 to 209 the composition is skewed to pro residues; that stretch reads RLPPPPAPPRS. A fc-binding region spans residues 235 to 380; sequence SPGETFSTNV…GHITISTAAQ (146 aa). A glycan (N-linked (GlcNAc...) asparagine; by host) is linked at asparagine 243. 3 disulfides stabilise this stretch: cysteine 271–cysteine 297, cysteine 280–cysteine 289, and cysteine 314–cysteine 323. The interval 394-413 is disordered; that stretch reads GADLAEPTHPHVGAPPHAPP. Residues 403 to 413 show a composition bias toward low complexity; the sequence is PHVGAPPHAPP. Residues 420–440 traverse the membrane as a helical segment; it reads LGAVMGAALLLSALGLSVWAC. The Intravirion segment spans residues 441–550; that stretch reads MTCWRRRAWR…SQASDSSVFW (110 aa). 2 short sequence motifs (internalization motif) span residues 463–466 and 472–475; these read YIRV and YADW. Residues 470-495 are interaction with VP22 and UL11; sequence ELYADWSSDSEGERDQVPWLAPPERP. 2 positions are modified to phosphoserine; by host CK2: serine 476 and serine 477. The tract at residues 476 to 484 is acidic; the sequence is SSDSEGERD. Residues 476–550 form a disordered region; sequence SSDSEGERDQ…SQASDSSVFW (75 aa). Serine 503 carries the phosphoserine modification. Residues 541–550 show a composition bias toward polar residues; sequence SQASDSSVFW.

Belongs to the alphaherpesvirinae glycoprotein E family. In terms of assembly, interacts with gI; this interaction enhances the Fc receptor function of gE. The heterodimer gE/gI interacts with the Fc part of host IgG. Interacts (via C-terminus) with VP22 tegument protein; this interaction is necessary for the recruitment of VP22 to the Golgi and its packaging into virions. Interacts (via C-terminus) with UL11 tegument protein. In terms of processing, phosphorylated on serines within the acidic cluster. Phosphorylation determines whether endocytosed viral gE traffics to the trans-Golgi network or recycles to the cell membrane. Post-translationally, N-glycosylated, and sulfated.

It is found in the virion membrane. It localises to the host cell membrane. Its subcellular location is the host cell junction. The protein resides in the host Golgi apparatus membrane. The protein localises to the host endosome membrane. Functionally, in epithelial cells, the heterodimer gE/gI is required for the cell-to-cell spread of the virus, by sorting nascent virions to cell junctions. Once the virus reaches the cell junctions, virus particles can spread to adjacent cells extremely rapidly through interactions with cellular receptors that accumulate at these junctions. Implicated in basolateral spread in polarized cells. In neuronal cells, gE/gI is essential for the anterograde spread of the infection throughout the host nervous system. Together with US9, the heterodimer gE/gI is involved in the sorting and transport of viral structural components toward axon tips. Its function is as follows. The heterodimer gE/gI serves as a receptor for the Fc part of host IgG. Dissociation of gE/gI from IgG occurs at acidic pH. May thus be involved in anti-HSV antibodies bipolar bridging, followed by intracellular endocytosis and degradation, thereby interfering with host IgG-mediated immune responses. This is Envelope glycoprotein E (gE) from Human herpesvirus 1 (strain 17) (HHV-1).